A 946-amino-acid polypeptide reads, in one-letter code: Bifunctional glutamine synthetase adenylyltransferase/adenylyl-removing enzyme (946 aa).

Positions 1-440 (MKPLSSPLQQ…VFNELIGDDE (440 aa)) are adenylyl removase. An adenylyl transferase region spans residues 449–946 (SEQWRELWQD…ASWQKWLVEE (498 aa)).

It belongs to the GlnE family. The cofactor is Mg(2+).

The enzyme catalyses [glutamine synthetase]-O(4)-(5'-adenylyl)-L-tyrosine + phosphate = [glutamine synthetase]-L-tyrosine + ADP. It catalyses the reaction [glutamine synthetase]-L-tyrosine + ATP = [glutamine synthetase]-O(4)-(5'-adenylyl)-L-tyrosine + diphosphate. Its function is as follows. Involved in the regulation of glutamine synthetase GlnA, a key enzyme in the process to assimilate ammonia. When cellular nitrogen levels are high, the C-terminal adenylyl transferase (AT) inactivates GlnA by covalent transfer of an adenylyl group from ATP to specific tyrosine residue of GlnA, thus reducing its activity. Conversely, when nitrogen levels are low, the N-terminal adenylyl removase (AR) activates GlnA by removing the adenylyl group by phosphorolysis, increasing its activity. The regulatory region of GlnE binds the signal transduction protein PII (GlnB) which indicates the nitrogen status of the cell. The polypeptide is Bifunctional glutamine synthetase adenylyltransferase/adenylyl-removing enzyme (Escherichia coli O81 (strain ED1a)).